Reading from the N-terminus, the 494-residue chain is Cysteine--tRNA ligase (494 aa).

Cysteine 29 provides a ligand contact to Zn(2+). The 'HIGH' region signature appears at 31–41 (VTVYDHCHIGH). Zn(2+)-binding residues include cysteine 209, histidine 234, and glutamate 238. The short motif at 266 to 270 (KMSKS) is the 'KMSKS' region element. Residue lysine 269 coordinates ATP.

This sequence belongs to the class-I aminoacyl-tRNA synthetase family. In terms of assembly, monomer. Zn(2+) is required as a cofactor.

It is found in the cytoplasm. The catalysed reaction is tRNA(Cys) + L-cysteine + ATP = L-cysteinyl-tRNA(Cys) + AMP + diphosphate. This is Cysteine--tRNA ligase from Geotalea daltonii (strain DSM 22248 / JCM 15807 / FRC-32) (Geobacter daltonii).